The sequence spans 327 residues: Undecaprenyl-phosphate 4-deoxy-4-formamido-L-arabinose transferase (327 aa).

Topologically, residues 1 to 235 (MFDAAPIKKV…TCLTTTPLRL (235 aa)) are cytoplasmic. The helical transmembrane segment at 236 to 256 (LSLLGSVIAIGGFSLSVLLIV) threads the bilayer. Topologically, residues 257 to 269 (LRLALGPQWAAEG) are periplasmic. Residues 270–290 (VFMLFAVLFTFIGAQFIGMGL) form a helical membrane-spanning segment. The Cytoplasmic segment spans residues 291–327 (LGEYIGRIYNDVRARPRYFVQQVIYPESTPFTEESHQ).

This sequence belongs to the glycosyltransferase 2 family.

The protein resides in the cell inner membrane. The catalysed reaction is UDP-4-deoxy-4-formamido-beta-L-arabinose + di-trans,octa-cis-undecaprenyl phosphate = 4-deoxy-4-formamido-alpha-L-arabinopyranosyl di-trans,octa-cis-undecaprenyl phosphate + UDP. The protein operates within glycolipid biosynthesis; 4-amino-4-deoxy-alpha-L-arabinose undecaprenyl phosphate biosynthesis; 4-amino-4-deoxy-alpha-L-arabinose undecaprenyl phosphate from UDP-4-deoxy-4-formamido-beta-L-arabinose and undecaprenyl phosphate: step 1/2. It participates in bacterial outer membrane biogenesis; lipopolysaccharide biosynthesis. Its function is as follows. Catalyzes the transfer of 4-deoxy-4-formamido-L-arabinose from UDP to undecaprenyl phosphate. The modified arabinose is attached to lipid A and is required for resistance to polymyxin and cationic antimicrobial peptides. This chain is Undecaprenyl-phosphate 4-deoxy-4-formamido-L-arabinose transferase, found in Salmonella dublin (strain CT_02021853).